Here is a 337-residue protein sequence, read N- to C-terminus: Endochitinase 37 (337 aa).

A signal peptide spans 1–25 (MTRLLDASFLLLPVIASTLFGTASA). One can recognise a GH18 domain in the interval 38–337 (KVLQGYWENW…GSKNWTFGDN (300 aa)). The active-site Proton donor is Glu160. A glycan (N-linked (GlcNAc...) asparagine) is linked at Asn331.

Belongs to the glycosyl hydrolase 18 family. Chitinase class V subfamily. As to quaternary structure, monomer.

It is found in the secreted. The catalysed reaction is Random endo-hydrolysis of N-acetyl-beta-D-glucosaminide (1-&gt;4)-beta-linkages in chitin and chitodextrins.. In terms of biological role, secreted chitinase involved in the degradation of chitin, a component of the cell walls of fungi and exoskeletal elements of some animals (including worms and arthropods). Plays a morphogenetic role during apical growth, cell division and differentiation (cell wall morphogenesis). May be involved in the degradation and further assimilation of phytopathogenic fungi, namely mycoparasitism, the major mechanism accounting for the antagonistic activity against phytopathogenic fungi displayed by Trichoderma. In Trichoderma harzianum (Hypocrea lixii), this protein is Endochitinase 37 (chit37).